Reading from the N-terminus, the 429-residue chain is Adenylosuccinate synthetase (429 aa).

Residues 12–18 (GDEGKGK) and 40–42 (GHT) contribute to the GTP site. The active-site Proton acceptor is the Asp13. Residues Asp13 and Gly40 each contribute to the Mg(2+) site. Residues 13–16 (DEGK), 38–41 (NAGH), Thr129, Arg143, Gln223, Thr238, and Arg302 contribute to the IMP site. His41 acts as the Proton donor in catalysis. 298–304 (TVTGRRR) lines the substrate pocket. GTP is bound by residues Arg304, 330–332 (KLD), and 412–414 (STS).

This sequence belongs to the adenylosuccinate synthetase family. In terms of assembly, homodimer. Requires Mg(2+) as cofactor.

The protein resides in the cytoplasm. It carries out the reaction IMP + L-aspartate + GTP = N(6)-(1,2-dicarboxyethyl)-AMP + GDP + phosphate + 2 H(+). The protein operates within purine metabolism; AMP biosynthesis via de novo pathway; AMP from IMP: step 1/2. Its function is as follows. Plays an important role in the de novo pathway of purine nucleotide biosynthesis. Catalyzes the first committed step in the biosynthesis of AMP from IMP. The protein is Adenylosuccinate synthetase of Granulibacter bethesdensis (strain ATCC BAA-1260 / CGDNIH1).